The following is a 315-amino-acid chain: Olfactory receptor 3A1 (315 aa).

The Extracellular segment spans residues 1 to 28 (MQPESGANGTVIAEFILLGLLEAPGLQP). Residue N8 is glycosylated (N-linked (GlcNAc...) asparagine). A helical transmembrane segment spans residues 29–52 (VVFVLFLFAYLVTVGGNLSILAAV). Topologically, residues 53 to 60 (LVEPELHT) are cytoplasmic. Residues 61 to 82 (PMYFFLGNLSVLDVGCISVTVP) traverse the membrane as a helical segment. Residues 83 to 103 (SMLSRLLSRKRAVPCGACLTQ) lie on the Extracellular side of the membrane. Cysteines 100 and 192 form a disulfide. The chain crosses the membrane as a helical span at residues 104–123 (LFFFHLFVGVDCFLLIAMAY). The Cytoplasmic portion of the chain corresponds to 124-143 (DRFLAICRPLTYSTRMSQTV). Residues 144–161 (QRMLVAASWACAFTNALT) form a helical membrane-spanning segment. Topologically, residues 162–199 (HTVAMSTLNFCGPNVINHFYCDLPQLCQLSCSSTQLSE) are extracellular. Residues 200–223 (LLLFAVGFIMAGTSMALIVISYIH) traverse the membrane as a helical segment. Over 224 to 240 (VAAAVLRIRSVEGRKKA) the chain is Cytoplasmic. Residues 241-264 (FSTCGSHLTVVAIFYGSGIFNYMR) traverse the membrane as a helical segment. Over 265-275 (LGSTKLSDKDK) the chain is Extracellular. The chain crosses the membrane as a helical span at residues 276–295 (AVGIFNTVINPMLNPIIYSF). Residues 296–315 (RNPDVQSAIWRMLTGRRSLA) lie on the Cytoplasmic side of the membrane.

The protein belongs to the G-protein coupled receptor 1 family.

The protein resides in the cell membrane. Functionally, odorant receptor. The chain is Olfactory receptor 3A1 (OR3A1) from Gorilla gorilla gorilla (Western lowland gorilla).